Here is a 645-residue protein sequence, read N- to C-terminus: Serine/threonine-protein kinase BUR1 (645 aa).

One can recognise a Protein kinase domain in the interval 55–379 (YREEEKLGQG…AMKAKKHPFF (325 aa)). Residues 61-69 (LGQGTFGEV) and Lys-84 contribute to the ATP site. Asp-208 acts as the Proton acceptor in catalysis. 3 disordered regions span residues 407–428 (EMNE…STDN), 442–513 (ASIP…KYPA), and 533–645 (RYRN…ADYY). Composition is skewed to polar residues over residues 409–428 (NESM…STDN) and 457–474 (IPAQ…TQNI). Pro residues predominate over residues 477 to 486 (EPIPTAPLPK). Over residues 578–598 (NRYQNQDYNTSRNTGYNQYSQ) the composition is skewed to polar residues.

The protein belongs to the protein kinase superfamily. CMGC Ser/Thr protein kinase family. CDC2/CDKX subfamily.

It is found in the nucleus. The catalysed reaction is L-seryl-[protein] + ATP = O-phospho-L-seryl-[protein] + ADP + H(+). It carries out the reaction L-threonyl-[protein] + ATP = O-phospho-L-threonyl-[protein] + ADP + H(+). The enzyme catalyses [DNA-directed RNA polymerase] + ATP = phospho-[DNA-directed RNA polymerase] + ADP + H(+). Its function is as follows. Serine/threonine-protein kinase involved in transcription regulation. Phosphorylates the UBC2/RAD6 ubiquitin-conjugating enzyme (E2), leading to monoubiquitination of histone H2B and the silencing of telomeric-associated genes. Also required for histone H3 methylation. Necessary for the recovery from pheromone-induced growth arrest in the cell cycle G1 phase. This chain is Serine/threonine-protein kinase BUR1 (BUR1), found in Kluyveromyces lactis (strain ATCC 8585 / CBS 2359 / DSM 70799 / NBRC 1267 / NRRL Y-1140 / WM37) (Yeast).